The primary structure comprises 259 residues: Deoxyribose-phosphate aldolase (259 aa).

The Proton donor/acceptor role is filled by D102. K167 functions as the Schiff-base intermediate with acetaldehyde in the catalytic mechanism. K201 functions as the Proton donor/acceptor in the catalytic mechanism.

The protein belongs to the DeoC/FbaB aldolase family. DeoC type 2 subfamily.

It localises to the cytoplasm. It catalyses the reaction 2-deoxy-D-ribose 5-phosphate = D-glyceraldehyde 3-phosphate + acetaldehyde. It functions in the pathway carbohydrate degradation; 2-deoxy-D-ribose 1-phosphate degradation; D-glyceraldehyde 3-phosphate and acetaldehyde from 2-deoxy-alpha-D-ribose 1-phosphate: step 2/2. Catalyzes a reversible aldol reaction between acetaldehyde and D-glyceraldehyde 3-phosphate to generate 2-deoxy-D-ribose 5-phosphate. The protein is Deoxyribose-phosphate aldolase of Escherichia coli O45:K1 (strain S88 / ExPEC).